We begin with the raw amino-acid sequence, 438 residues long: Nucleolar protein 12 (438 aa).

2 disordered regions span residues 1 to 28 (MGETNSSLDNENTSFVGKLSSSSNVDPT) and 60 to 94 (ANGVEEAAETIESDTKEVQNIKPKSKKKKKKLNDS). The segment covering 60 to 71 (ANGVEEAAETIE) has biased composition (acidic residues). Phosphoserine is present on residues Ser94 and Ser95. Positions 108–146 (AEEDEEKDKDSAGLINDEEDKSPAKQSVLEERTSQEDVK) are disordered. Residues 135-146 (VLEERTSQEDVK) show a composition bias toward basic and acidic residues. RRM domains lie at 164–262 (KTVF…SVSH) and 270–348 (RCVF…RAKS). Composition is skewed to basic residues over residues 346–357 (AKSTKPKSITRS) and 402–412 (AKKKVNKKRKE). Disordered regions lie at residues 346–366 (AKSTKPKSITRSKRGDEKTRT) and 390–438 (EGHR…KKDK).

This sequence belongs to the RRM RBM34 family.

It localises to the nucleus. The protein localises to the nucleolus. Functionally, involved in pre-25S rRNA processing. The chain is Nucleolar protein 12 (nop12) from Schizosaccharomyces pombe (strain 972 / ATCC 24843) (Fission yeast).